Reading from the N-terminus, the 291-residue chain is 4-diphosphocytidyl-2-C-methyl-D-erythritol kinase (291 aa).

The active site involves K11. 95–105 (PVAAGLAGGSS) contacts ATP. D137 is a catalytic residue.

It belongs to the GHMP kinase family. IspE subfamily.

It catalyses the reaction 4-CDP-2-C-methyl-D-erythritol + ATP = 4-CDP-2-C-methyl-D-erythritol 2-phosphate + ADP + H(+). It functions in the pathway isoprenoid biosynthesis; isopentenyl diphosphate biosynthesis via DXP pathway; isopentenyl diphosphate from 1-deoxy-D-xylulose 5-phosphate: step 3/6. Its function is as follows. Catalyzes the phosphorylation of the position 2 hydroxy group of 4-diphosphocytidyl-2C-methyl-D-erythritol. This chain is 4-diphosphocytidyl-2-C-methyl-D-erythritol kinase, found in Alkaliphilus metalliredigens (strain QYMF).